The following is a 177-amino-acid chain: Eggshell protein (177 aa).

An N-terminal signal peptide occupies residues 1-18; that stretch reads MKQSLTLVFLVAIGYATA. Tandem repeats lie at residues 25-41, 42-59, 60-75, 76-91, and 92-112. The tract at residues 25-112 is 5 X approximate tandem repeats; it reads YSGGYGGGCY…GCSGGNCGGG (88 aa). Residues 149–166 show a composition bias toward gly residues; that stretch reads GSGKGKGGGKGGKGGKGG. A disordered region spans residues 149-177; it reads GSGKGKGGGKGGKGGKGGTYKPSHYGGGY.

The protein is Eggshell protein (F10) of Schistosoma mansoni (Blood fluke).